We begin with the raw amino-acid sequence, 23 residues long: U3-ctenitoxin-Co1a (23 aa).

Cystine bridges form between Cys-2/Cys-17 and Cys-9/Cys-22.

As to expression, expressed by the venom gland.

The protein localises to the secreted. Its function is as follows. Antagonist of L-type calcium channels (Cav1/CACNA1). The protein is U3-ctenitoxin-Co1a of Ctenus ornatus (Brazilian spider).